Reading from the N-terminus, the 885-residue chain is Probable LRR receptor-like serine/threonine-protein kinase At1g51820 (885 aa).

Residues 1-20 (MERHFVFIATYLLIFHLVQA) form the signal peptide. Topologically, residues 21–509 (QNQTGFISVD…GHKKKSVIVP (489 aa)) are extracellular. Residues asparagine 22, asparagine 93, asparagine 135, asparagine 194, asparagine 228, asparagine 250, asparagine 254, asparagine 281, asparagine 287, asparagine 424, asparagine 437, asparagine 456, and asparagine 461 are each glycosylated (N-linked (GlcNAc...) asparagine). 3 LRR repeats span residues 403–424 (IITS…AIKN), 427–447 (HLQI…EFLA), and 451–473 (SLLV…LLQK). A helical transmembrane segment spans residues 510–530 (VVASIASIAVLIGALVLFLIL). At 531-885 (RKKRSPKVEG…FGTEVSPNAR (355 aa)) the chain is on the cytoplasmic side. The Protein kinase domain maps to 578-851 (NNFQRILGKG…QVVIELNECL (274 aa)). ATP-binding positions include 584 to 592 (LGKGGFGMV) and lysine 606. Position 651 is a phosphotyrosine (tyrosine 651). Catalysis depends on aspartate 703, which acts as the Proton acceptor. Serine 737 carries the phosphoserine modification. Phosphothreonine occurs at positions 738 and 743. Tyrosine 751 bears the Phosphotyrosine mark.

The protein belongs to the protein kinase superfamily. Ser/Thr protein kinase family.

Its subcellular location is the membrane. It catalyses the reaction L-seryl-[protein] + ATP = O-phospho-L-seryl-[protein] + ADP + H(+). It carries out the reaction L-threonyl-[protein] + ATP = O-phospho-L-threonyl-[protein] + ADP + H(+). This is Probable LRR receptor-like serine/threonine-protein kinase At1g51820 from Arabidopsis thaliana (Mouse-ear cress).